Consider the following 98-residue polypeptide: NADH-ubiquinone oxidoreductase chain 4L (98 aa).

A run of 3 helical transmembrane segments spans residues 2–22 (QMTMINMILAFIMATTGLLMF), 26–46 (FMSSLLCLEGMMLSIFILMSI), and 59–79 (FPLVLLVFAACEAAIGLSLLV).

This sequence belongs to the complex I subunit 4L family. In terms of assembly, core subunit of respiratory chain NADH dehydrogenase (Complex I) which is composed of 45 different subunits.

It is found in the mitochondrion inner membrane. The enzyme catalyses a ubiquinone + NADH + 5 H(+)(in) = a ubiquinol + NAD(+) + 4 H(+)(out). Functionally, core subunit of the mitochondrial membrane respiratory chain NADH dehydrogenase (Complex I) which catalyzes electron transfer from NADH through the respiratory chain, using ubiquinone as an electron acceptor. Part of the enzyme membrane arm which is embedded in the lipid bilayer and involved in proton translocation. The polypeptide is NADH-ubiquinone oxidoreductase chain 4L (MT-ND4L) (Echinosorex gymnura (Moon rat)).